Consider the following 304-residue polypeptide: N-acetylmuramic acid 6-phosphate etherase (304 aa).

The 164-residue stretch at 62-225 (IVQAFQNGGR…TTASMVMIGK (164 aa)) folds into the SIS domain. Glu90 serves as the catalytic Proton donor. Glu121 is an active-site residue.

It belongs to the GCKR-like family. MurNAc-6-P etherase subfamily. As to quaternary structure, homodimer.

It catalyses the reaction N-acetyl-D-muramate 6-phosphate + H2O = N-acetyl-D-glucosamine 6-phosphate + (R)-lactate. The protein operates within amino-sugar metabolism; 1,6-anhydro-N-acetylmuramate degradation. It functions in the pathway amino-sugar metabolism; N-acetylmuramate degradation. It participates in cell wall biogenesis; peptidoglycan recycling. In terms of biological role, specifically catalyzes the cleavage of the D-lactyl ether substituent of MurNAc 6-phosphate, producing GlcNAc 6-phosphate and D-lactate. Together with AnmK, is also required for the utilization of anhydro-N-acetylmuramic acid (anhMurNAc) either imported from the medium or derived from its own cell wall murein, and thus plays a role in cell wall recycling. The chain is N-acetylmuramic acid 6-phosphate etherase from Actinobacillus pleuropneumoniae serotype 5b (strain L20).